The primary structure comprises 329 residues: 2-oxoglutarate-dependent dioxygenase mpl2 (329 aa).

Residues 183-288 (PACPLRLLHY…RYSVVFFFDG (106 aa)) form the Fe2OG dioxygenase domain. Residues His211, Asp213, and His269 each coordinate Fe cation. Arg279 contributes to the 2-oxoglutarate binding site.

This sequence belongs to the iron/ascorbate-dependent oxidoreductase family. Fe(2+) serves as cofactor.

It participates in mycotoxin biosynthesis. 2-oxoglutarate-dependent dioxygenase; part of the gene cluster that mediates the biosynthesis of the mycotoxin citrinin, a hepato-nephrotoxic compound to humans due to inhibition of respiration complex III. The pathway begins with the synthesis of a keto-aldehyde intermediate by the citrinin PKS (pksCT) from successive condensations of 4 malonyl-CoA units, presumably with a simple acetyl-CoA starter unit. Release of the keto-aldehyde intermediate is consistent with the presence of the C-terminal reductive release domain. Mp11 collaborates with pksCT by catalyzing the hydrolysis of ACP-bound acyl intermediates to free the ACP from stalled intermediates. Mpl2 then catalyzes the oxidation of the C-12 methyl of the ketone intermediate to an alcohol intermediate which is further oxidized by the oxidoreductase mpl7 to produce a bisaldehyde intermediate. The fourth catalytic step is catalyzed by the mpl4 aldehyde dehydrogenase. The final transformation is the reduction of C-3 by mpl6 to provide the chemically stable citrinin nucleus. The polypeptide is 2-oxoglutarate-dependent dioxygenase mpl2 (Monascus purpureus (Red mold)).